The primary structure comprises 863 residues: Paramyosin (863 aa).

Positions 1–18 (MSESHVKISRTIIRGTSP) are nonhelical region. The stretch at 19–836 (STVRLESRVR…ERTITIKRTI (818 aa)) forms a coiled coil. A nonhelical region region spans residues 837-863 (GGPGSRAVSVVREINSVSRGNRATSIM).

It belongs to the paramyosin family. Homodimer or monomer in secreted form.

The protein resides in the cytoplasm. It is found in the myofibril. Its subcellular location is the secreted. Paramyosin is a major structural component of many thick filaments isolated from invertebrate muscles. It is a prominent antigen in human cysticercosis, may have a role as a modulator of the host immune response. It is able to bind collagen and has complement inhibitor activity. The polypeptide is Paramyosin (PMY) (Taenia solium (Pork tapeworm)).